The sequence spans 164 residues: Putative 4-hydroxy-4-methyl-2-oxoglutarate aldolase (164 aa).

Substrate contacts are provided by residues 75–78 (GDML) and R97. Residue D98 participates in a divalent metal cation binding.

This sequence belongs to the class II aldolase/RraA-like family. In terms of assembly, homotrimer. It depends on a divalent metal cation as a cofactor.

The enzyme catalyses 4-hydroxy-4-methyl-2-oxoglutarate = 2 pyruvate. It catalyses the reaction oxaloacetate + H(+) = pyruvate + CO2. In terms of biological role, catalyzes the aldol cleavage of 4-hydroxy-4-methyl-2-oxoglutarate (HMG) into 2 molecules of pyruvate. Also contains a secondary oxaloacetate (OAA) decarboxylase activity due to the common pyruvate enolate transition state formed following C-C bond cleavage in the retro-aldol and decarboxylation reactions. This is Putative 4-hydroxy-4-methyl-2-oxoglutarate aldolase from Hahella chejuensis (strain KCTC 2396).